The following is a 218-amino-acid chain: ATP-dependent Clp protease proteolytic subunit 2 (218 aa).

The protein belongs to the peptidase S14 family. In terms of assembly, fourteen ClpP subunits assemble into 2 heptameric rings which stack back to back to give a disk-like structure with a central cavity, resembling the structure of eukaryotic proteasomes.

It is found in the cytoplasm. The enzyme catalyses Hydrolysis of proteins to small peptides in the presence of ATP and magnesium. alpha-casein is the usual test substrate. In the absence of ATP, only oligopeptides shorter than five residues are hydrolyzed (such as succinyl-Leu-Tyr-|-NHMec, and Leu-Tyr-Leu-|-Tyr-Trp, in which cleavage of the -Tyr-|-Leu- and -Tyr-|-Trp bonds also occurs).. Its function is as follows. Cleaves peptides in various proteins in a process that requires ATP hydrolysis. Has a chymotrypsin-like activity. Plays a major role in the degradation of misfolded proteins. The protein is ATP-dependent Clp protease proteolytic subunit 2 of Gloeobacter violaceus (strain ATCC 29082 / PCC 7421).